A 371-amino-acid polypeptide reads, in one-letter code: MASSDGKPGGVFDHHVQTAVCDSRAKYREGRRPRAVKVYTINLESQYLLIQGVPAVGAMKELVERFALYGAIEQYNALDEYPAEDFTEVYLIKFVKLQSARVAKKKMDEQSFFGGLLHVCYAPEFETVEETRKKLQERKAYITRVTKNQDCYMAKKKPVPEQKGTKDSRQGFHPPMPGFGTAALNTSPESPPENSSSCLPYSCEFPLSCFASKSTCSRGEHVDRVSDSCNSARNHGELSRHRDHSAFSPKLQMNTYKNSVPCSSVQEAIATSQAVGRFMPRTTQLQERKRRRDCDRELGTLLETHTSSNEVLIGPKLPGIPTVDLQDDSLNTTATLIRRKLKEVISSVPKPPEDNIKDVCTSHPGKQRRRI.

Residues 46–124 (QYLLIQGVPA…GLLHVCYAPE (79 aa)) form the RRM domain. Disordered stretches follow at residues 157-191 (KPVP…PESP) and 348-371 (VPKP…RRRI). Basic and acidic residues predominate over residues 158–170 (PVPEQKGTKDSRQ).

The protein belongs to the RBM48 family. Component of the minor spliceosome. Within this complex, interacts with ARMC7 and PRPF8/PRP8.

As a component of the minor spliceosome, involved in the splicing of U12-type introns in pre-mRNAs. The polypeptide is RNA-binding protein 48 (Rbm48) (Mus musculus (Mouse)).